The primary structure comprises 235 residues: Phosphoribosylaminoimidazole-succinocarboxamide synthase (235 aa).

Belongs to the SAICAR synthetase family.

It carries out the reaction 5-amino-1-(5-phospho-D-ribosyl)imidazole-4-carboxylate + L-aspartate + ATP = (2S)-2-[5-amino-1-(5-phospho-beta-D-ribosyl)imidazole-4-carboxamido]succinate + ADP + phosphate + 2 H(+). It participates in purine metabolism; IMP biosynthesis via de novo pathway; 5-amino-1-(5-phospho-D-ribosyl)imidazole-4-carboxamide from 5-amino-1-(5-phospho-D-ribosyl)imidazole-4-carboxylate: step 1/2. This chain is Phosphoribosylaminoimidazole-succinocarboxamide synthase, found in Streptococcus gordonii (strain Challis / ATCC 35105 / BCRC 15272 / CH1 / DL1 / V288).